A 343-amino-acid polypeptide reads, in one-letter code: Tumor necrosis factor receptor superfamily member wgn (343 aa).

Disordered stretches follow at residues 1–44 (MMPP…IGGS) and 74–96 (SSAANTDIAPPDPPPVSQVSIAS). The signal sequence occupies residues 1-76 (MMPPRLPGGH…ATSASSSSSA (76 aa)). The span at 13–24 (AMRSRSSSSGHH) shows a compositional bias: low complexity. A compositionally biased stretch (basic residues) spans 29 to 39 (FHKRRRRRQQH). The Extracellular portion of the chain corresponds to 77-201 (ANTDIAPPDP…AAWVLDWQTG (125 aa)). Residues 99–137 (PCAPQHWWDSQRDRCTPCTRCQGEMIPLRPCQLHTDTIC) form a TNFR-Cys repeat. Disulfide bonds link Cys-100–Cys-113, Cys-116–Cys-129, and Cys-119–Cys-137. Residues 202 to 222 (VLYVAVLTCLVFFSVAACILI) traverse the membrane as a helical segment. Over 223-343 (HHMRQWRRME…GVRGCSGLKG (121 aa)) the chain is Cytoplasmic. Residues 225–257 (MRQWRRMERRLDQDVEELSTKLMAKLAEVQSLD) adopt a coiled-coil conformation.

Monomer. Interacts (via extracellular cystein-rich domain) with egr (via secreted TNF-homology soluble form); forms heterohexamers when 3 copies associate with egr trimers. Interacts with Traf6. Interacts with Moe. As to expression, expressed in the adult midgut; under normal conditions expressed at higher levels than the other TNF receptor grnd.

It is found in the cell membrane. It localises to the cytoplasmic vesicle membrane. Receptor for egr. Involved in induction of apoptosis by triggering JNK signaling. Mediates the tumor suppressor activity of egr which eliminates oncogenic cells from epithelia, thereby maintaining epithelial integrity. Following UV-induced epidermal damage, binds to egr released from apoptotic epidermal cells and plays a role in development of thermal allodynia, a responsiveness to subthreshold thermal stimuli which are not normally perceived as noxious. Together with Moe, involved in control of axon targeting of R8 and R2-R5 photoreceptors, independent of egr. The chain is Tumor necrosis factor receptor superfamily member wgn from Drosophila melanogaster (Fruit fly).